Consider the following 216-residue polypeptide: Vascular endothelial growth factor A (216 aa).

The first 26 residues, 1–26 (MNFLLTWIHWGLAALLYFHNAKVLQA), serve as a signal peptide directing secretion. 3 disulfides stabilise this stretch: C52-C94, C83-C128, and C87-C130. An N-linked (GlcNAc...) asparagine glycan is attached at N101. The tract at residues 140–161 (QEKKSKREKGKGQKRKRKRGRY) is disordered. The span at 145–161 (KREKGKGQKRKRKRGRY) shows a compositional bias: basic residues.

The protein belongs to the PDGF/VEGF growth factor family. As to quaternary structure, homodimer; disulfide-linked. Also found as heterodimer with PGF. Interacts to the FLT1/VEGFR1 and KDR/VEGFR2 receptors, heparan sulfate and heparin. As to expression, expressed in venom gland, heart, brain, liver, skeletal muscle and kidney.

It is found in the secreted. In terms of biological role, growth factor active in angiogenesis, vasculogenesis and endothelial cell growth. Induces endothelial cell proliferation, promotes cell migration, inhibits apoptosis and induces permeabilization of blood vessels. The chain is Vascular endothelial growth factor A from Protobothrops flavoviridis (Habu).